The sequence spans 656 residues: Very long-chain specific acyl-CoA dehydrogenase, mitochondrial (656 aa).

Residues 1–33 are disordered; that stretch reads MQSARMTPSVGRQLLRLGARSSRSTTVLQGQPR. A mitochondrion-targeting transit peptide spans 1–41; it reads MQSARMTPSVGRQLLRLGARSSRSTTVLQGQPRPISAQRLY. The interval 42–483 is catalytic; it reads AREATQAVLD…ALQGCMDKGK (442 aa). At lysine 52 the chain carries N6-acetyllysine. 2 positions are modified to N6-acetyllysine; alternate: lysine 72 and lysine 128. N6-succinyllysine; alternate occurs at positions 72 and 128. N6-succinyllysine is present on lysine 196. 215 to 224 contributes to the FAD binding site; it reads FCLTEPSSGS. Residue cysteine 238 is modified to S-nitrosocysteine. Lysine 240 carries the N6-acetyllysine; alternate modification. The residue at position 240 (lysine 240) is an N6-succinyllysine; alternate. 250 to 252 lines the FAD pocket; it reads WIS. Lysine 269 carries the post-translational modification N6-succinyllysine. N6-acetyllysine; alternate is present on residues lysine 277 and lysine 279. 2 positions are modified to N6-succinyllysine; alternate: lysine 277 and lysine 279. Residues lysine 299 and lysine 317 each carry the N6-acetyllysine modification. Residue lysine 332 is modified to N6-acetyllysine; alternate. An N6-succinyllysine; alternate modification is found at lysine 332. Lysine 373 carries the N6-succinyllysine modification. A substrate-binding site is contributed by 462-464; sequence FEG. The Proton acceptor role is filled by glutamate 463. FAD is bound at residue 465-467; it reads AND. N6-acetyllysine; alternate is present on lysine 483. Residue lysine 483 is modified to N6-succinyllysine; alternate. The segment at 484 to 517 is membrane-anchoring; that stretch reads ELTGLGNALKNPFGNVGLLMGEAGKQLRRRTGIG. A phosphoserine mark is found at serine 518 and serine 523. Lysine 551 carries the N6-acetyllysine modification. Lysine 557 is modified (N6-acetyllysine; alternate). At lysine 557 the chain carries N6-succinyllysine; alternate. Position 563 (glutamine 563) interacts with FAD. Position 640 is an N6-succinyllysine (lysine 640).

It belongs to the acyl-CoA dehydrogenase family. As to quaternary structure, homodimer. Homodimerizes after import into the mitochondrion. FAD is required as a cofactor. S-nitrosylation at Cys-238 in liver improves catalytic efficiency.

It is found in the mitochondrion inner membrane. It carries out the reaction a very-long-chain 2,3-saturated fatty acyl-CoA + oxidized [electron-transfer flavoprotein] + H(+) = a very-long-chain (2E)-enoyl-CoA + reduced [electron-transfer flavoprotein]. The catalysed reaction is dodecanoyl-CoA + oxidized [electron-transfer flavoprotein] + H(+) = (2E)-dodecenoyl-CoA + reduced [electron-transfer flavoprotein]. The enzyme catalyses tetradecanoyl-CoA + oxidized [electron-transfer flavoprotein] + H(+) = (2E)-tetradecenoyl-CoA + reduced [electron-transfer flavoprotein]. It catalyses the reaction oxidized [electron-transfer flavoprotein] + hexadecanoyl-CoA + H(+) = (2E)-hexadecenoyl-CoA + reduced [electron-transfer flavoprotein]. It carries out the reaction octadecanoyl-CoA + oxidized [electron-transfer flavoprotein] + H(+) = (2E)-octadecenoyl-CoA + reduced [electron-transfer flavoprotein]. The catalysed reaction is eicosanoyl-CoA + oxidized [electron-transfer flavoprotein] + H(+) = (2E)-eicosenoyl-CoA + reduced [electron-transfer flavoprotein]. The enzyme catalyses docosanoyl-CoA + oxidized [electron-transfer flavoprotein] + H(+) = (2E)-docosenoyl-CoA + reduced [electron-transfer flavoprotein]. It catalyses the reaction tetracosanoyl-CoA + oxidized [electron-transfer flavoprotein] + H(+) = (2E)-tetracosenoyl-CoA + reduced [electron-transfer flavoprotein]. It participates in lipid metabolism; mitochondrial fatty acid beta-oxidation. Functionally, very long-chain specific acyl-CoA dehydrogenase is one of the acyl-CoA dehydrogenases that catalyze the first step of mitochondrial fatty acid beta-oxidation, an aerobic process breaking down fatty acids into acetyl-CoA and allowing the production of energy from fats. The first step of fatty acid beta-oxidation consists in the removal of one hydrogen from C-2 and C-3 of the straight-chain fatty acyl-CoA thioester, resulting in the formation of trans-2-enoyl-CoA. Among the different mitochondrial acyl-CoA dehydrogenases, very long-chain specific acyl-CoA dehydrogenase acts specifically on acyl-CoAs with saturated 12 to 24 carbons long primary chains. In Mus musculus (Mouse), this protein is Very long-chain specific acyl-CoA dehydrogenase, mitochondrial.